The following is a 427-amino-acid chain: UDP-N-acetylglucosamine 1-carboxyvinyltransferase (427 aa).

Position 22-23 (22-23 (KN)) interacts with phosphoenolpyruvate. Arginine 92 is a binding site for UDP-N-acetyl-alpha-D-glucosamine. The active-site Proton donor is the aspartate 116. UDP-N-acetyl-alpha-D-glucosamine-binding residues include aspartate 312 and methionine 334.

Belongs to the EPSP synthase family. MurA subfamily.

The protein resides in the cytoplasm. The catalysed reaction is phosphoenolpyruvate + UDP-N-acetyl-alpha-D-glucosamine = UDP-N-acetyl-3-O-(1-carboxyvinyl)-alpha-D-glucosamine + phosphate. The protein operates within cell wall biogenesis; peptidoglycan biosynthesis. Its function is as follows. Cell wall formation. Adds enolpyruvyl to UDP-N-acetylglucosamine. This Borreliella burgdorferi (strain ATCC 35210 / DSM 4680 / CIP 102532 / B31) (Borrelia burgdorferi) protein is UDP-N-acetylglucosamine 1-carboxyvinyltransferase.